Here is a 179-residue protein sequence, read N- to C-terminus: Large ribosomal subunit protein uL6 (179 aa).

Belongs to the universal ribosomal protein uL6 family. In terms of assembly, part of the 50S ribosomal subunit.

In terms of biological role, this protein binds to the 23S rRNA, and is important in its secondary structure. It is located near the subunit interface in the base of the L7/L12 stalk, and near the tRNA binding site of the peptidyltransferase center. This Syntrophobacter fumaroxidans (strain DSM 10017 / MPOB) protein is Large ribosomal subunit protein uL6.